A 102-amino-acid polypeptide reads, in one-letter code: Circadian clock oscillator protein KaiA (102 aa).

One can recognise a KaiA C-terminal domain in the interval 1–102 (MTQEVDQQIL…CEAYRGAIFK (102 aa)).

Belongs to the KaiA family. In terms of assembly, homodimer. The KaiABC complex composition changes during the circadian cycle to control KaiC phosphorylation. Complexes KaiC(6), KaiA(2-4):KaiC(6), KaiB(6):KaiC(6) and KaiC(6):KaiB(6):KaiA(12) are among the most important forms, many form cooperatively. KaiA and CikA bind to the same region of the KaiB(fs) form and therefore compete.

In terms of biological role, key component of the KaiABC oscillator complex, which constitutes the main circadian regulator in cyanobacteria. Complex composition changes during the circadian cycle to control KaiC phosphorylation. KaiA stimulates KaiC autophosphorylation, while KaiB sequesters KaiA, leading to KaiC autodephosphorylation. KaiA binding to the KaiC CII domain during the subjective day yields KaiA(2-4):KaiC(6) complexes which stimulate KaiC autophosphorylation. Phospho-Ser-431 KaiC accumulation triggers binding of KaiB during the subjective night to form the KaiB(6):KaiC(6) complex, leading to changes in the output regulators CikA and SasA. KaiB(6):KaiC(6) formation exposes a site for KaiA binding on KaiB that sequesters KaiA from KaiC's CII domain, making the KaiC(6):KaiB(6):KaiA(12) complex resulting in KaiC autodephosphorylation. Complete dephosphorylation of KaiC leads to dissociation of KaiA(2):KaiB(1), completing 1 cycle of the Kai oscillator. The sequence is that of Circadian clock oscillator protein KaiA from Nostoc sp. (strain PCC 7120 / SAG 25.82 / UTEX 2576).